The following is a 141-amino-acid chain: Galactose-6-phosphate isomerase subunit LacA (141 aa).

Belongs to the LacAB/RpiB family. In terms of assembly, heteromultimeric protein consisting of LacA and LacB.

It carries out the reaction aldehydo-D-galactose 6-phosphate = keto-D-tagatose 6-phosphate. Its pathway is carbohydrate metabolism; D-galactose 6-phosphate degradation; D-tagatose 6-phosphate from D-galactose 6-phosphate: step 1/1. The chain is Galactose-6-phosphate isomerase subunit LacA from Streptococcus pneumoniae (strain ATCC 700669 / Spain 23F-1).